Reading from the N-terminus, the 81-residue chain is Photosystem I iron-sulfur center (81 aa).

4Fe-4S ferredoxin-type domains are found at residues 2–31 and 37–68; these read SHAVKIYDTCIGCTQCVRACPLDVLEMVPW and GQIASSPRTEDCVGCKRCETACPTDFLSIRVY. Residues Cys11, Cys14, Cys17, Cys21, Cys48, Cys51, Cys54, and Cys58 each contribute to the [4Fe-4S] cluster site.

As to quaternary structure, the cyanobacterial PSI reaction center is composed of one copy each of PsaA,B,C,D,E,F,I,J,K,L,M and X, and forms trimeric complexes. [4Fe-4S] cluster is required as a cofactor.

The protein localises to the cellular thylakoid membrane. It catalyses the reaction reduced [plastocyanin] + hnu + oxidized [2Fe-2S]-[ferredoxin] = oxidized [plastocyanin] + reduced [2Fe-2S]-[ferredoxin]. Apoprotein for the two 4Fe-4S centers FA and FB of photosystem I (PSI); essential for photochemical activity. FB is the terminal electron acceptor of PSI, donating electrons to ferredoxin. The C-terminus interacts with PsaA/B/D and helps assemble the protein into the PSI complex. Required for binding of PsaD and PsaE to PSI. PSI is a plastocyanin/cytochrome c6-ferredoxin oxidoreductase, converting photonic excitation into a charge separation, which transfers an electron from the donor P700 chlorophyll pair to the spectroscopically characterized acceptors A0, A1, FX, FA and FB in turn. This Synechococcus sp. (strain WH7803) protein is Photosystem I iron-sulfur center.